The sequence spans 903 residues: Zinc finger CCCH domain-containing protein 27 (903 aa).

The tract at residues 1-144 (MIKESSSPAL…GRNGAPWAQH (144 aa)) is disordered. Residues 11 to 24 (DADKIEVPSPKDEN) are compositionally biased toward basic and acidic residues. Acidic residues predominate over residues 33-46 (TDNEDFEISDDDDD). The span at 86 to 96 (SHGEAQKDFFP) shows a compositional bias: basic and acidic residues. The segment at 225–253 (GMPRQRCRDFEERGFCLRGDMCPMEHGLN) adopts a C3H1-type zinc-finger fold. The tract at residues 390–456 (ASKKLGHGKT…GRQSNRASHK (67 aa)) is disordered. The span at 397-410 (GKTANATSTSATGN) shows a compositional bias: low complexity. The segment covering 432–441 (KDSNGQSNSR) has biased composition (polar residues). In terms of domain architecture, RRM spans 459-531 (RTLYVNGIPL…RFIKLWWANR (73 aa)). 3 disordered regions span residues 545-609 (KSSH…DTKR), 642-720 (KQKG…QTSP), and 826-903 (TNHS…DVSQ). Residues 556-576 (SVPQPSSSNRGKENLQSATPR) are compositionally biased toward polar residues. Positions 577-587 (ASSGSSAEASG) are enriched in low complexity. A coiled-coil region spans residues 608–649 (KRQESLELLEELRKKQEILAQKRDEFRRQLEKLAKQKGLANS). Low complexity predominate over residues 693–708 (SGELASSSHKSSATSA). A compositionally biased stretch (polar residues) spans 826-886 (TNHSRFQKTS…SMPTATSAKT (61 aa)).

In Oryza sativa subsp. japonica (Rice), this protein is Zinc finger CCCH domain-containing protein 27.